Reading from the N-terminus, the 1053-residue chain is MGIFNGLPVPSDKTYLREELARIDESWAAARFDSLPHVVHILTSKDREADIHILKEQSDVVEEVVDEVVHAYHGGFNKAIQNYSQILRLFSESTEKIGDLKHDLAEAKQSLGARNKQLHQLWYRSVTLRHIISLLDQIEGIAKVPSRIEKLIADKQFYAAIQVYLQSSLMLEREGLQTVGALQDVRSELTKLRGALFFKILDDLHAHLYNRGEYSSVASSIYERDDEVPTTTAVAASRMSSQPLSRRTRTLKGDSQFGVRGLTNGSYRTASNDESSSFDGHDEEDSVEHDESTADTARNGTDSKLLSHQLPPWLSDSTPDEFIEAVRKSDDPLHVKYLQTLVQCLCMLGKVAAAGAIICQKLRPTIHEIIISKIKAHLETTNLSKSACSQGDRSVAAGLHLIKGQSEAYRLSKEKPQNGISNSGTHLAVSPVSPLMAPGGKAQAAAKELLDSILDTIVKIFENHVVIGELLEMKASQHDINTPRSLPTDVNWNTESEASQATGGYTISFPLTVLQSECQQLICEILRATPEAASADAAAQTAKLAKKAPKKDKRDAPEDGLTFTFRFTDATVSISNQGADLIRQGWGKRAPNASLEGYGSAAVLPEQGIYLAASIYRPVLQFTDKITSMLPKKHSQLVNDGLLTFTENFVKDHLLPTMFVDYRKGVQQAISSAAAFRPRAHTTTYTATVEKGRPILQGLLAIDLLAKEVLGWAQAMPKFATDLVKYVQTFLERTFERCRTSYMEAVLEKLSYMLIGRHDIEKLMRLDAASACLPSTLGHAVSHSEAVGTEVELSDLFLSLRPIKQDNLIRDDNKLILLASLSDSLEYVADSIERLGQAVPRVASQAEGNSRNQAASPRNLASFADEYRKLATDCLKVLRVEMQLETVFHLQEMTNREYLEDEDAEEPDDFVISLTSQITRREEGMAPFISGEKRNYVFGGISGIAANASIKALADMRSINLFGVQQICRNTIAVEQAMAAIPYIDGETVQQNLDRVRTYFELLNMPFEALLAFIAEHDQMFTPTEYSNLLKVNVPGRDTPSDAQSRLLEILSH.

The stretch at 91–121 (SESTEKIGDLKHDLAEAKQSLGARNKQLHQL) forms a coiled coil. The disordered stretch occupies residues 255-308 (SQFGVRGLTNGSYRTASNDESSSFDGHDEEDSVEHDESTADTARNGTDSKLLSH). Polar residues-rich tracts occupy residues 263–278 (TNGS…SSSF) and 294–306 (ADTA…SKLL).

The protein belongs to the SEC8 family. As to quaternary structure, the exocyst complex is composed of SEC3, SEC5, SEC6, SEC8, SEC10, EXO70A1 and EXO84B.

The protein resides in the cytoplasm. It is found in the cytosol. The protein localises to the cytoskeleton. Its subcellular location is the phragmoplast. It localises to the secreted. The protein resides in the cell wall. It is found in the extracellular exosome. Its function is as follows. Component of the exocyst complex involved in the docking of exocytic vesicles with fusion sites on the plasma membrane during regulated or polarized secretion. Involved in polarized cell growth and organ morphogenesis. During cytokinesis, involved in secretory processes during cell plate initiation, cell plate maturation and formation of new primary cell wall. Functionally, participates in polarized pectin delivery required for the polarized development of the mucilage-producing volcano cells of the seed coat. The protein is Exocyst complex component SEC8 (SEC8) of Arabidopsis thaliana (Mouse-ear cress).